A 545-amino-acid chain; its full sequence is CTP synthase (545 aa).

The amidoligase domain stretch occupies residues 1–264 (MQYIVVTGGV…ITRLSKLLNM (264 aa)). Ser-12 is a CTP binding site. Ser-12 is a binding site for UTP. Residue 13–18 (GLGKGT) coordinates ATP. Tyr-53 contributes to the L-glutamine binding site. Asp-70 provides a ligand contact to ATP. The Mg(2+) site is built by Asp-70 and Glu-140. CTP contacts are provided by residues 147 to 149 (DIE), 185 to 190 (KTKPTQ), and Arg-221. Residues 185 to 190 (KTKPTQ) and Arg-221 each bind UTP. Positions 294–527 (YVDLHDAYIS…VEQALIFKHR (234 aa)) constitute a Glutamine amidotransferase type-1 domain. Gly-347 contributes to the L-glutamine binding site. Cys-374 functions as the Nucleophile; for glutamine hydrolysis in the catalytic mechanism. Residues 375 to 378 (LGFQ), Glu-398, and Arg-455 each bind L-glutamine. Active-site residues include His-500 and Glu-502.

The protein belongs to the CTP synthase family. Homotetramer.

The enzyme catalyses UTP + L-glutamine + ATP + H2O = CTP + L-glutamate + ADP + phosphate + 2 H(+). The catalysed reaction is L-glutamine + H2O = L-glutamate + NH4(+). It carries out the reaction UTP + NH4(+) + ATP = CTP + ADP + phosphate + 2 H(+). It participates in pyrimidine metabolism; CTP biosynthesis via de novo pathway; CTP from UDP: step 2/2. Allosterically activated by GTP, when glutamine is the substrate; GTP has no effect on the reaction when ammonia is the substrate. The allosteric effector GTP functions by stabilizing the protein conformation that binds the tetrahedral intermediate(s) formed during glutamine hydrolysis. Inhibited by the product CTP, via allosteric rather than competitive inhibition. In terms of biological role, catalyzes the ATP-dependent amination of UTP to CTP with either L-glutamine or ammonia as the source of nitrogen. Regulates intracellular CTP levels through interactions with the four ribonucleotide triphosphates. This chain is CTP synthase, found in Thermoplasma acidophilum (strain ATCC 25905 / DSM 1728 / JCM 9062 / NBRC 15155 / AMRC-C165).